Consider the following 447-residue polypeptide: MTVDEQVSNYYDMLLKRNAGEPEFHQAVAEVLESLKIVLEKDPHYADYGLIQRLCEPERQLIFRVPWVDDQGQVHVNRGFRVQFNSALGPYKGGLRFHPSVNLGIVKFLGFEQIFKNSLTGLPIGGGKGGSDFDPKGKSDLEIMRFCQSFMTELHRHIGEYRDVPAGDIGVGGREIGYLFGHYRRMANQHESGVLTGKGLTWGGSLVRTEATGYGCVYFVSEMIKAKGESISGQKIIVSGSGNVATYAIEKAQELGATVIGFSDSSGWVHTPNGVDVAKLREIKEVRRARVSVYADEVEGATYHTDGSIWDLKCDIALPCATQNELNGENAKTLADNGCRFVAEGANMPSTPEAVEVFRERDIRFGPGKAANAGGVATSALEMQQNASRDSWSFEYTDERLQVIMKNIFKTCAETAAEYGHENDYVVGANIAGFKKVADAMLAQGVI.

Residues K92, Q113, and K116 each coordinate substrate. K128 functions as the Proton donor in the catalytic mechanism. G167 is a substrate binding site. Residues T212 and N243 each coordinate NADP(+). S379 contributes to the substrate binding site.

The protein belongs to the Glu/Leu/Phe/Val dehydrogenases family. In terms of assembly, homohexamer.

The enzyme catalyses L-glutamate + NADP(+) + H2O = 2-oxoglutarate + NH4(+) + NADPH + H(+). Catalyzes the reversible oxidative deamination of glutamate to alpha-ketoglutarate and ammonia. This chain is NADP-specific glutamate dehydrogenase (gdh), found in Corynebacterium glutamicum (strain ATCC 13032 / DSM 20300 / JCM 1318 / BCRC 11384 / CCUG 27702 / LMG 3730 / NBRC 12168 / NCIMB 10025 / NRRL B-2784 / 534).